The sequence spans 176 residues: Magnesium-dependent phosphatase 1 (176 aa).

The active-site Nucleophile is Asp11. Asp11 is a Mg(2+) binding site. Phosphate-binding residues include Leu12 and Asp13. Asp13 is a Mg(2+) binding site. Asp13 acts as the Proton donor in catalysis. Residue Trp20 participates in substrate binding. Phosphate is bound by residues Ser69, Arg70, and Lys100. Arg70 lines the substrate pocket. Asp123 contacts Mg(2+).

It belongs to the HAD-like hydrolase superfamily. The cofactor is Mg(2+).

It catalyses the reaction O-phospho-L-tyrosyl-[protein] + H2O = L-tyrosyl-[protein] + phosphate. Its activity is regulated as follows. Inhibited by vanadate and zinc, and slightly by calcium. In terms of biological role, magnesium-dependent phosphatase which may act as a tyrosine phosphatase. In Homo sapiens (Human), this protein is Magnesium-dependent phosphatase 1 (MDP1).